Reading from the N-terminus, the 82-residue chain is Ice-structuring protein A (82 aa).

The first 23 residues, 1–23 (MALSLFTVGQLIFLFWTMRITEA), serve as a signal peptide directing secretion. A propeptide spans 24-44 (SPDPAAKAAPAAAAAPAAAAP) (removed by a dipeptidylpeptidase). Arginine 81 carries the arginine amide modification.

This sequence belongs to the type-I AFP family. In terms of tissue distribution, detected in liver and in blood serum (at protein level).

It localises to the secreted. Contributes to protect fish blood from freezing at subzero sea water temperatures. Lowers the blood freezing point. Binds to nascent ice crystals and prevents further growth. This chain is Ice-structuring protein A, found in Pseudopleuronectes americanus (Winter flounder).